The sequence spans 140 residues: Transcription antitermination protein NusB (140 aa).

This sequence belongs to the NusB family.

In terms of biological role, involved in transcription antitermination. Required for transcription of ribosomal RNA (rRNA) genes. Binds specifically to the boxA antiterminator sequence of the ribosomal RNA (rrn) operons. The sequence is that of Transcription antitermination protein NusB from Myxococcus xanthus (strain DK1622).